Reading from the N-terminus, the 123-residue chain is ATP synthase epsilon chain (123 aa).

It belongs to the ATPase epsilon chain family. As to quaternary structure, F-type ATPases have 2 components, CF(1) - the catalytic core - and CF(0) - the membrane proton channel. CF(1) has five subunits: alpha(3), beta(3), gamma(1), delta(1), epsilon(1). CF(0) has three main subunits: a, b and c.

The protein resides in the cell inner membrane. Functionally, produces ATP from ADP in the presence of a proton gradient across the membrane. The protein is ATP synthase epsilon chain of Helicobacter pylori (strain Shi470).